A 274-amino-acid chain; its full sequence is MQAATSRESYKIAADRLDEYVRGAESSAVATTAEDLLSVADLLRREPRLRRALVDPARSGADRADLLAGILGGKVGGDALDLLTTLVSHRWSAPSELLDGAERLGVAALLAAADKAGDLGEVEDELFRFGQVVAGQSTLSNVLSDPAAPAAQRATLAGELLAGKARPVTVRLVEVALGGFGGRSFVGALTRLVELAADQRDRQVAYVTVAAPLGAEEERRLVASLSAIYGREVTVKQSVNPEVLGGVSVQVGSDLYDGTVLRRLNESRNALAKR.

Belongs to the ATPase delta chain family. As to quaternary structure, F-type ATPases have 2 components, F(1) - the catalytic core - and F(0) - the membrane proton channel. F(1) has five subunits: alpha(3), beta(3), gamma(1), delta(1), epsilon(1). F(0) has three main subunits: a(1), b(2) and c(10-14). The alpha and beta chains form an alternating ring which encloses part of the gamma chain. F(1) is attached to F(0) by a central stalk formed by the gamma and epsilon chains, while a peripheral stalk is formed by the delta and b chains.

It localises to the cell membrane. Its function is as follows. F(1)F(0) ATP synthase produces ATP from ADP in the presence of a proton or sodium gradient. F-type ATPases consist of two structural domains, F(1) containing the extramembraneous catalytic core and F(0) containing the membrane proton channel, linked together by a central stalk and a peripheral stalk. During catalysis, ATP synthesis in the catalytic domain of F(1) is coupled via a rotary mechanism of the central stalk subunits to proton translocation. Functionally, this protein is part of the stalk that links CF(0) to CF(1). It either transmits conformational changes from CF(0) to CF(1) or is implicated in proton conduction. In Salinispora tropica (strain ATCC BAA-916 / DSM 44818 / JCM 13857 / NBRC 105044 / CNB-440), this protein is ATP synthase subunit delta.